The following is a 395-amino-acid chain: Flap endonuclease 1 (395 aa).

The interval 1 to 104 is N-domain; it reads MGIKQLFQII…GELAKRFQRK (104 aa). A Mg(2+)-binding site is contributed by aspartate 34. DNA contacts are provided by arginine 47 and arginine 70. Mg(2+)-binding residues include aspartate 86, glutamate 158, glutamate 160, aspartate 179, and aspartate 181. Residues 122 to 253 are I-domain; it reads DIEKFSRRTV…TTALKLIRDH (132 aa). Glutamate 158 provides a ligand contact to DNA. DNA-binding residues include glycine 231 and aspartate 233. Residue aspartate 233 coordinates Mg(2+). An interaction with PCNA region spans residues 341–349; sequence QQARLEGFF. Residues 344-395 are disordered; sequence RLEGFFKPVPKTDAQKAAHKRKLEEKNEEKKKKLKQEKKDKAAAKSKPRGAA. The segment covering 365 to 386 has biased composition (basic and acidic residues); sequence KLEEKNEEKKKKLKQEKKDKAA.

This sequence belongs to the XPG/RAD2 endonuclease family. FEN1 subfamily. In terms of assembly, interacts with PCNA. Three molecules of FEN1 bind to one PCNA trimer with each molecule binding to one PCNA monomer. PCNA stimulates the nuclease activity without altering cleavage specificity. The cofactor is Mg(2+). In terms of processing, phosphorylated. Phosphorylation upon DNA damage induces relocalization to the nuclear plasma.

It is found in the nucleus. The protein localises to the nucleolus. It localises to the nucleoplasm. The protein resides in the mitochondrion. Structure-specific nuclease with 5'-flap endonuclease and 5'-3' exonuclease activities involved in DNA replication and repair. During DNA replication, cleaves the 5'-overhanging flap structure that is generated by displacement synthesis when DNA polymerase encounters the 5'-end of a downstream Okazaki fragment. It enters the flap from the 5'-end and then tracks to cleave the flap base, leaving a nick for ligation. Also involved in the long patch base excision repair (LP-BER) pathway, by cleaving within the apurinic/apyrimidinic (AP) site-terminated flap. Acts as a genome stabilization factor that prevents flaps from equilibrating into structures that lead to duplications and deletions. Also possesses 5'-3' exonuclease activity on nicked or gapped double-stranded DNA, and exhibits RNase H activity. Also involved in replication and repair of rDNA and in repairing mitochondrial DNA. This Fusarium vanettenii (strain ATCC MYA-4622 / CBS 123669 / FGSC 9596 / NRRL 45880 / 77-13-4) (Fusarium solani subsp. pisi) protein is Flap endonuclease 1.